We begin with the raw amino-acid sequence, 926 residues long: Beta-mannosidase A (926 aa).

The signal sequence occupies residues Met-1–Gly-21. 5 N-linked (GlcNAc...) asparagine glycosylation sites follow: Asn-40, Asn-242, Asn-277, Asn-311, and Asn-342. The active-site Proton donor is the Glu-474. N-linked (GlcNAc...) asparagine glycans are attached at residues Asn-532, Asn-603, Asn-626, Asn-653, Asn-733, Asn-756, Asn-785, Asn-793, Asn-819, and Asn-905.

Belongs to the glycosyl hydrolase 2 family. Beta-mannosidase A subfamily. In terms of assembly, homodimer.

The protein localises to the secreted. It catalyses the reaction Hydrolysis of terminal, non-reducing beta-D-mannose residues in beta-D-mannosides.. It participates in glycan metabolism; N-glycan degradation. Exoglycosidase that cleaves the single beta-linked mannose residue from the non-reducing end of beta-mannosidic oligosaccharides of various complexity and length. Involved in the degradation of polymeric mannan and galactomannan. This chain is Beta-mannosidase A (mndA), found in Aspergillus fumigatus (strain CBS 144.89 / FGSC A1163 / CEA10) (Neosartorya fumigata).